The primary structure comprises 316 residues: tRNA dimethylallyltransferase (316 aa).

An ATP-binding site is contributed by 17–24; the sequence is GPTASGKT. 19–24 contacts substrate; sequence TASGKT. Interaction with substrate tRNA regions lie at residues 42 to 45, 166 to 170, 247 to 252, and 280 to 287; these read DSAL, QRLSR, RCVGYR, and KRQITWLR.

The protein belongs to the IPP transferase family. Monomer. It depends on Mg(2+) as a cofactor.

It carries out the reaction adenosine(37) in tRNA + dimethylallyl diphosphate = N(6)-dimethylallyladenosine(37) in tRNA + diphosphate. In terms of biological role, catalyzes the transfer of a dimethylallyl group onto the adenine at position 37 in tRNAs that read codons beginning with uridine, leading to the formation of N6-(dimethylallyl)adenosine (i(6)A). The protein is tRNA dimethylallyltransferase of Escherichia coli O127:H6 (strain E2348/69 / EPEC).